Consider the following 1071-residue polypeptide: ATP-dependent helicase/deoxyribonuclease subunit B (1071 aa).

This sequence belongs to the helicase family. AddB/RexB type 2 subfamily. As to quaternary structure, heterodimer of AddA and RexB. Requires Mg(2+) as cofactor.

The heterodimer acts as both an ATP-dependent DNA helicase and an ATP-dependent, dual-direction single-stranded exonuclease. Recognizes the chi site generating a DNA molecule suitable for the initiation of homologous recombination. This subunit has 5' -&gt; 3' nuclease activity but not helicase activity. The chain is ATP-dependent helicase/deoxyribonuclease subunit B from Streptococcus pyogenes serotype M12 (strain MGAS2096).